Reading from the N-terminus, the 284-residue chain is MAVDIEYSYSSMAPSLRRERFTFKISPKLNKPLRPCIQLGSKDEAGRMVAPTVQEKKVKKRVSFADNQGLALTMVKVFSEFDDPLDIPFNITELLDNIVSLTTAESESFVLDFPQPSADYLDFRNRLQTNHVCLENCVLKEKAIAGTVKVQNLAFEKVVKIRMTFDTWKSFTDFPCQYVKDTYAGSDRDTFSFDISLPEKIQSYERMEFAVCYECNGQSYWDSNKGKNYRITRAELRSTQGMTEPYNGPDFGISFDQFGSPRCSFGLFPEWPSYLGYEKLGPYY.

Residues 61-64 carry the PP1-binding motif motif; sequence RVSF. The 109-residue stretch at 124–232 folds into the CBM21 domain; it reads RNRLQTNHVC…SNKGKNYRIT (109 aa). The residue at position 260 (Ser260) is a Phosphoserine.

In terms of assembly, interacts with glycogen, PPP1CC catalytic subunit of PP1 and PYGL. Associates with glycogen particles. Forms complexes with debranching enzyme, glycogen phosphorylase, glycogen synthase and phosphorylase kinase which is necessary for its regulation of PP1 activity. Highly expressed in liver. Moderately expressed in kidney, heart, testis, spleen and lung. Weakly expressed in skeletal muscle (at protein level). Expressed predominantly in liver. Expressed moderately in heart. Expressed weakly in lung, kidney, spleen and skeletal muscle.

Acts as a glycogen-targeting subunit for phosphatase PP1. Facilitates interaction of the PP1 with enzymes of the glycogen metabolism and regulates its activity. Suppresses the rate at which PP1 dephosphorylates (inactivates) glycogen phosphorylase and enhances the rate at which it activates glycogen synthase and therefore limits glycogen breakdown. Its activity is inhibited by PYGL, resulting in inhibition of the glycogen synthase and glycogen phosphorylase phosphatase activities of PP1. Dramatically increases basal and insulin-stimulated glycogen synthesis upon overexpression in hepatocytes. The polypeptide is Protein phosphatase 1 regulatory subunit 3B (Ppp1r3b) (Rattus norvegicus (Rat)).